A 476-amino-acid polypeptide reads, in one-letter code: MKWEVVIGLEVHAQLSTQSKIFSGASTAFGAAPNTQACAVDIALPGVLPVMNRVAMEKAVRFGLAIGATVNPVSIFARKNYFYPDLPKGYQISQFEKPIVEGGQIAIRVGETERRINLTRAHLEEDAGKSLHEEFEGSTGIDLNRAGTPLLEIVSEPEMRSAAEAVAYARALHGLVTWLGICDGNMQEGSFRVDANVSVRPEGQAEFGTRREIKNLNSFRFLEQAINYEVQWQIDLIEDGGKVQQATVLFDPATGETRAMRSKEDAHDYRYFPDPDLLPLTVTEADFAAVRADMPELPGEMAARFVESFGVPELDAAQLTQSLDVARYFEAAAAASGQGKLAANWITGELAARLNREDMALAACPIAPERLAGLLVRIADNTVSSKLARQVFDALWDSELSADAVIERDGLKQVSDAGAIEKLVDDAIAGNPKAVEEFRAGKEKALNALAGQVMKASKGKANPAQVQDILRQKLAG.

This sequence belongs to the GatB/GatE family. GatB subfamily. In terms of assembly, heterotrimer of A, B and C subunits.

The enzyme catalyses L-glutamyl-tRNA(Gln) + L-glutamine + ATP + H2O = L-glutaminyl-tRNA(Gln) + L-glutamate + ADP + phosphate + H(+). It carries out the reaction L-aspartyl-tRNA(Asn) + L-glutamine + ATP + H2O = L-asparaginyl-tRNA(Asn) + L-glutamate + ADP + phosphate + 2 H(+). In terms of biological role, allows the formation of correctly charged Asn-tRNA(Asn) or Gln-tRNA(Gln) through the transamidation of misacylated Asp-tRNA(Asn) or Glu-tRNA(Gln) in organisms which lack either or both of asparaginyl-tRNA or glutaminyl-tRNA synthetases. The reaction takes place in the presence of glutamine and ATP through an activated phospho-Asp-tRNA(Asn) or phospho-Glu-tRNA(Gln). This Laribacter hongkongensis (strain HLHK9) protein is Aspartyl/glutamyl-tRNA(Asn/Gln) amidotransferase subunit B.